The following is a 188-amino-acid chain: dCTP deaminase (188 aa).

109–114 (KSTYAR) contacts dCTP. The active-site Proton donor/acceptor is E135. DCTP contacts are provided by Q154, Y168, and Q178.

Belongs to the dCTP deaminase family. Homotrimer.

The catalysed reaction is dCTP + H2O + H(+) = dUTP + NH4(+). Its pathway is pyrimidine metabolism; dUMP biosynthesis; dUMP from dCTP (dUTP route): step 1/2. Its function is as follows. Catalyzes the deamination of dCTP to dUTP. This Helicobacter pylori (strain G27) protein is dCTP deaminase.